A 410-amino-acid chain; its full sequence is Phosphoglycerate kinase (410 aa).

Residues 19 to 21, arginine 34, 57 to 60, arginine 114, and arginine 154 each bind substrate; these read DLN and HQGK. Residues glutamate 332 and 358 to 361 each bind ATP; that span reads GGHS.

It belongs to the phosphoglycerate kinase family. In terms of assembly, homodimer.

Its subcellular location is the cytoplasm. It catalyses the reaction (2R)-3-phosphoglycerate + ATP = (2R)-3-phospho-glyceroyl phosphate + ADP. It participates in carbohydrate degradation; glycolysis; pyruvate from D-glyceraldehyde 3-phosphate: step 2/5. The sequence is that of Phosphoglycerate kinase (pgk) from Pyrococcus furiosus (strain ATCC 43587 / DSM 3638 / JCM 8422 / Vc1).